Consider the following 597-residue polypeptide: Electron transfer flavoprotein-ubiquinone oxidoreductase, mitochondrial (597 aa).

An FAD-binding site is contributed by 53–67 (VVIVGGGPSGLSAAI). The stretch at 91 to 112 (IGGHTLSGAVIETRALDELIPN) is an intramembrane region. G285 and G286 together coordinate a ubiquinone. Residues 409–426 (IDPATYDKNIRDTYVVKE) lie within the membrane without spanning it. The [4Fe-4S] cluster site is built by C540, C566, C569, and C572. Residues 557-586 (KRLQINAQNCIHCKTCDIKDPQQNINWVTP) enclose the 4Fe-4S ferredoxin-type domain.

This sequence belongs to the ETF-QO/FixC family. In terms of assembly, monomer. [4Fe-4S] cluster serves as cofactor. The cofactor is FAD.

The protein resides in the mitochondrion inner membrane. It catalyses the reaction a ubiquinone + reduced [electron-transfer flavoprotein] = a ubiquinol + oxidized [electron-transfer flavoprotein] + H(+). Accepts electrons from ETF and reduces ubiquinone. This chain is Electron transfer flavoprotein-ubiquinone oxidoreductase, mitochondrial (let-721), found in Caenorhabditis elegans.